The primary structure comprises 324 residues: Olfactory receptor 8U3 (324 aa).

Over 1 to 25 the chain is Extracellular; that stretch reads MAEVNIIYVTVFILKGITNRPELQA. The helical transmembrane segment at 26–46 threads the bilayer; sequence PCFGVFLVIYLVTVLGNLGLI. Over 47-54 the chain is Cytoplasmic; that stretch reads TLIKIDTR. The helical transmembrane segment at 55-75 threads the bilayer; that stretch reads LHTPMYYFLSHLAFVDLCYSS. The Extracellular segment spans residues 76–99; that stretch reads AITPKMMVNFVVERNTIPFHACAT. C97 and C189 form a disulfide bridge. The helical transmembrane segment at 100-120 threads the bilayer; sequence QLGCFLTFMITECFLLASMAY. The Cytoplasmic portion of the chain corresponds to 121–139; that stretch reads DCYVAICSPLHYSTLMSRR. Residues 140–160 form a helical membrane-spanning segment; that stretch reads VCIQLVAVPYIYSFLVALFHT. Residues 161–196 lie on the Extracellular side of the membrane; it reads VITFRLTYCGPNLINHFYCDDLPFLALSCSDTHMKE. The helical transmembrane segment at 197–217 threads the bilayer; it reads ILIFAFAGFDMISSSSIVLTS. The Cytoplasmic portion of the chain corresponds to 218–237; that stretch reads YIFIIAAILRIRSTQGQHKA. A helical transmembrane segment spans residues 238–258; it reads ISTCGSHMVTVTIFYGTLIFM. The Extracellular portion of the chain corresponds to 259–271; sequence YLQPKSNHSLDTD. An N-linked (GlcNAc...) asparagine glycan is attached at N265. Residues 272 to 292 form a helical membrane-spanning segment; sequence KMASVFYTVVIPMLNPLIYSL. The Cytoplasmic segment spans residues 293-324; the sequence is RNKEVKDASKKALDKGCENLQILTFLKIRKLY.

This sequence belongs to the G-protein coupled receptor 1 family.

The protein localises to the cell membrane. Its function is as follows. Odorant receptor. The polypeptide is Olfactory receptor 8U3 (Homo sapiens (Human)).